Reading from the N-terminus, the 118-residue chain is UPF0148 protein LS215_1455 (118 aa).

This sequence belongs to the UPF0148 family.

The sequence is that of UPF0148 protein LS215_1455 from Saccharolobus islandicus (strain L.S.2.15 / Lassen #1) (Sulfolobus islandicus).